The following is a 598-amino-acid chain: Elongation factor 4 (598 aa).

The tr-type G domain occupies 2-183 (KHIRNFCIIA…AIIEKIPHPK (182 aa)). GTP is bound by residues 14–19 (DHGKST) and 130–133 (NKVD).

This sequence belongs to the TRAFAC class translation factor GTPase superfamily. Classic translation factor GTPase family. LepA subfamily.

It localises to the cell inner membrane. The enzyme catalyses GTP + H2O = GDP + phosphate + H(+). Its function is as follows. Required for accurate and efficient protein synthesis under certain stress conditions. May act as a fidelity factor of the translation reaction, by catalyzing a one-codon backward translocation of tRNAs on improperly translocated ribosomes. Back-translocation proceeds from a post-translocation (POST) complex to a pre-translocation (PRE) complex, thus giving elongation factor G a second chance to translocate the tRNAs correctly. Binds to ribosomes in a GTP-dependent manner. This chain is Elongation factor 4, found in Flavobacterium psychrophilum (strain ATCC 49511 / DSM 21280 / CIP 103535 / JIP02/86).